The primary structure comprises 554 residues: Dihydroxy-acid dehydratase (554 aa).

Position 78 (aspartate 78) interacts with Mg(2+). Cysteine 119 is a [2Fe-2S] cluster binding site. 2 residues coordinate Mg(2+): aspartate 120 and lysine 121. Lysine 121 is modified (N6-carboxylysine). Cysteine 191 is a binding site for [2Fe-2S] cluster. Glutamate 442 contacts Mg(2+). Residue serine 468 is the Proton acceptor of the active site.

This sequence belongs to the IlvD/Edd family. As to quaternary structure, homodimer. The cofactor is [2Fe-2S] cluster. Mg(2+) serves as cofactor.

The catalysed reaction is (2R)-2,3-dihydroxy-3-methylbutanoate = 3-methyl-2-oxobutanoate + H2O. It catalyses the reaction (2R,3R)-2,3-dihydroxy-3-methylpentanoate = (S)-3-methyl-2-oxopentanoate + H2O. The protein operates within amino-acid biosynthesis; L-isoleucine biosynthesis; L-isoleucine from 2-oxobutanoate: step 3/4. It functions in the pathway amino-acid biosynthesis; L-valine biosynthesis; L-valine from pyruvate: step 3/4. Its function is as follows. Functions in the biosynthesis of branched-chain amino acids. Catalyzes the dehydration of (2R,3R)-2,3-dihydroxy-3-methylpentanoate (2,3-dihydroxy-3-methylvalerate) into 2-oxo-3-methylpentanoate (2-oxo-3-methylvalerate) and of (2R)-2,3-dihydroxy-3-methylbutanoate (2,3-dihydroxyisovalerate) into 2-oxo-3-methylbutanoate (2-oxoisovalerate), the penultimate precursor to L-isoleucine and L-valine, respectively. The sequence is that of Dihydroxy-acid dehydratase from Thermotoga sp. (strain RQ2).